The chain runs to 506 residues: D-alanine--D-alanyl carrier protein ligase (506 aa).

152-153 (TS) contacts ATP. D-alanine is bound at residue aspartate 197. 292–297 (NTYGPT) provides a ligand contact to ATP. Valine 301 serves as a coordination point for D-alanine. ATP is bound by residues aspartate 383, 395–398 (YRGR), and lysine 494. Residue lysine 494 participates in D-alanine binding.

It belongs to the ATP-dependent AMP-binding enzyme family. DltA subfamily.

It localises to the cytoplasm. The enzyme catalyses holo-[D-alanyl-carrier protein] + D-alanine + ATP = D-alanyl-[D-alanyl-carrier protein] + AMP + diphosphate. It participates in cell wall biogenesis; lipoteichoic acid biosynthesis. In terms of biological role, catalyzes the first step in the D-alanylation of lipoteichoic acid (LTA), the activation of D-alanine and its transfer onto the D-alanyl carrier protein (Dcp) DltC. In an ATP-dependent two-step reaction, forms a high energy D-alanyl-AMP intermediate, followed by transfer of the D-alanyl residue as a thiol ester to the phosphopantheinyl prosthetic group of the Dcp. D-alanylation of LTA plays an important role in modulating the properties of the cell wall in Gram-positive bacteria, influencing the net charge of the cell wall. This is D-alanine--D-alanyl carrier protein ligase from Lacticaseibacillus paracasei (strain ATCC 334 / BCRC 17002 / CCUG 31169 / CIP 107868 / KCTC 3260 / NRRL B-441) (Lactobacillus paracasei).